The primary structure comprises 429 residues: Glutamate-1-semialdehyde 2,1-aminomutase 2 (429 aa).

Lys268 carries the post-translational modification N6-(pyridoxal phosphate)lysine.

The protein belongs to the class-III pyridoxal-phosphate-dependent aminotransferase family. HemL subfamily. Homodimer. It depends on pyridoxal 5'-phosphate as a cofactor.

It is found in the cytoplasm. It carries out the reaction (S)-4-amino-5-oxopentanoate = 5-aminolevulinate. Its pathway is porphyrin-containing compound metabolism; protoporphyrin-IX biosynthesis; 5-aminolevulinate from L-glutamyl-tRNA(Glu): step 2/2. The chain is Glutamate-1-semialdehyde 2,1-aminomutase 2 from Bacillus anthracis (strain A0248).